The primary structure comprises 322 residues: CRISPR-associated protein Cas1 1 (322 aa).

Residues E149, H214, and E229 each coordinate Mn(2+).

This sequence belongs to the CRISPR-associated endonuclease Cas1 family. In terms of assembly, homodimer, forms a heterotetramer with a Cas2 homodimer. Mg(2+) serves as cofactor. It depends on Mn(2+) as a cofactor.

Functionally, CRISPR (clustered regularly interspaced short palindromic repeat), is an adaptive immune system that provides protection against mobile genetic elements (viruses, transposable elements and conjugative plasmids). CRISPR clusters contain spacers, sequences complementary to antecedent mobile elements, and target invading nucleic acids. CRISPR clusters are transcribed and processed into CRISPR RNA (crRNA). Acts as a dsDNA endonuclease. Involved in the integration of spacer DNA into the CRISPR cassette. The chain is CRISPR-associated protein Cas1 1 from Methanobrevibacter ruminantium (strain ATCC 35063 / DSM 1093 / JCM 13430 / OCM 146 / M1) (Methanobacterium ruminantium).